A 304-amino-acid polypeptide reads, in one-letter code: Phosphoribosylaminoimidazole-succinocarboxamide synthase (304 aa).

The protein belongs to the SAICAR synthetase family.

The enzyme catalyses 5-amino-1-(5-phospho-D-ribosyl)imidazole-4-carboxylate + L-aspartate + ATP = (2S)-2-[5-amino-1-(5-phospho-beta-D-ribosyl)imidazole-4-carboxamido]succinate + ADP + phosphate + 2 H(+). Its pathway is purine metabolism; IMP biosynthesis via de novo pathway; 5-amino-1-(5-phospho-D-ribosyl)imidazole-4-carboxamide from 5-amino-1-(5-phospho-D-ribosyl)imidazole-4-carboxylate: step 1/2. The protein is Phosphoribosylaminoimidazole-succinocarboxamide synthase of Streptomyces griseus subsp. griseus (strain JCM 4626 / CBS 651.72 / NBRC 13350 / KCC S-0626 / ISP 5235).